The following is a 1019-amino-acid chain: UPF0182 protein Tery_0938 (1019 aa).

The next 9 membrane-spanning stretches (helical) occupy residues 23-43, 67-87, 128-148, 192-212, 213-233, 270-290, 313-333, 355-375, and 416-436; these read IHIL…GFST, TETW…LVNL, LSLS…GLIL, LWLL…PILW, LSVF…SHWA, FWLI…YLLS, LGGG…FELL, YVFL…QAIF, and AILT…PKIV.

Belongs to the UPF0182 family.

The protein resides in the cell membrane. The chain is UPF0182 protein Tery_0938 from Trichodesmium erythraeum (strain IMS101).